We begin with the raw amino-acid sequence, 110 residues long: UPF0060 membrane protein Nmul_A0351 (110 aa).

The next 4 helical transmembrane spans lie at 7-27 (LFLF…PYLW), 33-53 (SAWL…LLTL), 63-83 (AAYG…VDGV), and 87-107 (AWDM…MFGP).

It belongs to the UPF0060 family.

It is found in the cell inner membrane. This chain is UPF0060 membrane protein Nmul_A0351, found in Nitrosospira multiformis (strain ATCC 25196 / NCIMB 11849 / C 71).